Reading from the N-terminus, the 554-residue chain is Carboxylesterase 1C (554 aa).

The N-terminal stretch at Met1 to Gly18 is a signal peptide. Residue Asn79 is glycosylated (N-linked (GlcNAc...) asparagine). Cys87 and Cys116 are oxidised to a cystine. The active-site Acyl-ester intermediate is the Ser221. Cysteines 273 and 284 form a disulfide. N-linked (GlcNAc...) asparagine glycosylation is found at Asn274 and Asn304. The active-site Charge relay system is Glu342. An N-linked (GlcNAc...) asparagine glycan is attached at Asn377. The active-site Charge relay system is His455. Ser473 is subject to Phosphoserine. Asn478 is a glycosylation site (N-linked (GlcNAc...) asparagine). Positions Thr551–Lys554 match the Prevents secretion from ER motif.

The protein belongs to the type-B carboxylesterase/lipase family. Expressed in lung, kidney and liver.

The protein resides in the endoplasmic reticulum lumen. The enzyme catalyses a carboxylic ester + H2O = an alcohol + a carboxylate + H(+). Its function is as follows. Involved in the detoxification of xenobiotics and in the activation of ester and amide prodrugs. Involved in the extracellular metabolism of lung surfactant. The protein is Carboxylesterase 1C (Ces1c) of Mus musculus (Mouse).